Here is a 461-residue protein sequence, read N- to C-terminus: Fumarate hydratase class II (461 aa).

Substrate is bound by residues 99-101 (SGT), arginine 127, 130-133 (HPND), 140-142 (SSN), and threonine 188. Histidine 189 acts as the Proton donor/acceptor in catalysis. Serine 319 is an active-site residue. Residues serine 320 and 325–327 (KVN) each bind substrate.

It belongs to the class-II fumarase/aspartase family. Fumarase subfamily. Homotetramer.

The protein localises to the cytoplasm. The catalysed reaction is (S)-malate = fumarate + H2O. Its pathway is carbohydrate metabolism; tricarboxylic acid cycle; (S)-malate from fumarate: step 1/1. In terms of biological role, involved in the TCA cycle. Catalyzes the stereospecific interconversion of fumarate to L-malate. In Chromobacterium violaceum (strain ATCC 12472 / DSM 30191 / JCM 1249 / CCUG 213 / NBRC 12614 / NCIMB 9131 / NCTC 9757 / MK), this protein is Fumarate hydratase class II.